Reading from the N-terminus, the 161-residue chain is Ribosome maturation factor RimP (161 aa).

The protein belongs to the RimP family.

The protein localises to the cytoplasm. Required for maturation of 30S ribosomal subunits. This Rickettsia conorii (strain ATCC VR-613 / Malish 7) protein is Ribosome maturation factor RimP.